Here is a 169-residue protein sequence, read N- to C-terminus: Probable chemoreceptor glutamine deamidase CheD (169 aa).

The protein belongs to the CheD family.

It catalyses the reaction L-glutaminyl-[protein] + H2O = L-glutamyl-[protein] + NH4(+). In terms of biological role, probably deamidates glutamine residues to glutamate on methyl-accepting chemotaxis receptors (MCPs), playing an important role in chemotaxis. The protein is Probable chemoreceptor glutamine deamidase CheD of Solibacter usitatus (strain Ellin6076).